Here is a 97-residue protein sequence, read N- to C-terminus: Theromacin (97 aa).

Positions 1–22 (MELKSGLSILLCFGICIAVINA) are cleaved as a signal peptide. 5 disulfides stabilise this stretch: C24/C31, C46/C50, C53/C95, C61/C69, and C79/C81.

As to expression, coelomic liquid (at protein level). Expressed in large fat cells in contact with coelomic cavities, in intestinal epithelia and at the epidermis level.

It localises to the secreted. Functionally, has a bactericidal activity. Active against M.luteus. No activity toward E.coli and F.oxysporum. This chain is Theromacin, found in Theromyzon tessulatum (Duck leech).